The sequence spans 325 residues: Ribosomal RNA small subunit methyltransferase H (325 aa).

S-adenosyl-L-methionine contacts are provided by residues 39 to 41 (GGH), Asp-59, Phe-90, Asp-108, and Gln-115.

It belongs to the methyltransferase superfamily. RsmH family.

The protein localises to the cytoplasm. The catalysed reaction is cytidine(1402) in 16S rRNA + S-adenosyl-L-methionine = N(4)-methylcytidine(1402) in 16S rRNA + S-adenosyl-L-homocysteine + H(+). In terms of biological role, specifically methylates the N4 position of cytidine in position 1402 (C1402) of 16S rRNA. The sequence is that of Ribosomal RNA small subunit methyltransferase H from Leptothrix cholodnii (strain ATCC 51168 / LMG 8142 / SP-6) (Leptothrix discophora (strain SP-6)).